The sequence spans 359 residues: MARKPALSPEEARAEALGTALATIERKYGKGAVMKLSDDAHVNIPVIPTGSIGLDLALGVGGIPRGRISEIFGPESSGKTTLTLHIIAECQRLGGTCAFVDAEHALDVSYARRLGVNTDELLISQPDYGEQALDIADMLVRSGAVDLVVVDSVAALIPQAELEGDMGETQVGGHARLMSHAMRRLTGTIHKSRTSVIFINQIRMKIGVTGYGSPETTTGGNALKFYSSVRLDIRRIQTLKDKEESFGSRTRVKVVKNKVAPPFRSAVFDILYGLGISRAGELLDLGIEAKIIDQSGSWFAFGAEKLGQGREKVRALLDENIDLRNQIEAKVVEFLGLHPREFTPTAEDIAESQDPVLED.

73 to 80 (GPESSGKT) contacts ATP.

The protein belongs to the RecA family.

The protein resides in the cytoplasm. Can catalyze the hydrolysis of ATP in the presence of single-stranded DNA, the ATP-dependent uptake of single-stranded DNA by duplex DNA, and the ATP-dependent hybridization of homologous single-stranded DNAs. It interacts with LexA causing its activation and leading to its autocatalytic cleavage. The sequence is that of Protein RecA from Desulfovibrio desulfuricans (strain ATCC 27774 / DSM 6949 / MB).